The primary structure comprises 436 residues: 3-ketoacyl-CoA thiolase (436 aa).

Cys-99 functions as the Acyl-thioester intermediate in the catalytic mechanism. Active-site proton acceptor residues include His-392 and Cys-422.

This sequence belongs to the thiolase-like superfamily. Thiolase family. As to quaternary structure, heterotetramer of two alpha chains (FadJ) and two beta chains (FadI).

Its subcellular location is the cytoplasm. The catalysed reaction is an acyl-CoA + acetyl-CoA = a 3-oxoacyl-CoA + CoA. It functions in the pathway lipid metabolism; fatty acid beta-oxidation. Functionally, catalyzes the final step of fatty acid oxidation in which acetyl-CoA is released and the CoA ester of a fatty acid two carbons shorter is formed. This is 3-ketoacyl-CoA thiolase from Shewanella amazonensis (strain ATCC BAA-1098 / SB2B).